We begin with the raw amino-acid sequence, 121 residues long: Large ribosomal subunit protein bL20 (121 aa).

Belongs to the bacterial ribosomal protein bL20 family.

Binds directly to 23S ribosomal RNA and is necessary for the in vitro assembly process of the 50S ribosomal subunit. It is not involved in the protein synthesizing functions of that subunit. The protein is Large ribosomal subunit protein bL20 of Ruegeria pomeroyi (strain ATCC 700808 / DSM 15171 / DSS-3) (Silicibacter pomeroyi).